The sequence spans 362 residues: Cobalt-precorrin-5B C(1)-methyltransferase (362 aa).

Belongs to the CbiD family.

It carries out the reaction Co-precorrin-5B + S-adenosyl-L-methionine = Co-precorrin-6A + S-adenosyl-L-homocysteine. The protein operates within cofactor biosynthesis; adenosylcobalamin biosynthesis; cob(II)yrinate a,c-diamide from sirohydrochlorin (anaerobic route): step 6/10. In terms of biological role, catalyzes the methylation of C-1 in cobalt-precorrin-5B to form cobalt-precorrin-6A. The polypeptide is Cobalt-precorrin-5B C(1)-methyltransferase (Burkholderia thailandensis (strain ATCC 700388 / DSM 13276 / CCUG 48851 / CIP 106301 / E264)).